The chain runs to 242 residues: Phosphoribosyl isomerase A (242 aa).

Asp-12 acts as the Proton acceptor in catalysis. Catalysis depends on Asp-131, which acts as the Proton donor.

This sequence belongs to the HisA/HisF family.

The protein resides in the cytoplasm. It catalyses the reaction 1-(5-phospho-beta-D-ribosyl)-5-[(5-phospho-beta-D-ribosylamino)methylideneamino]imidazole-4-carboxamide = 5-[(5-phospho-1-deoxy-D-ribulos-1-ylimino)methylamino]-1-(5-phospho-beta-D-ribosyl)imidazole-4-carboxamide. It carries out the reaction N-(5-phospho-beta-D-ribosyl)anthranilate = 1-(2-carboxyphenylamino)-1-deoxy-D-ribulose 5-phosphate. Its pathway is amino-acid biosynthesis; L-histidine biosynthesis; L-histidine from 5-phospho-alpha-D-ribose 1-diphosphate: step 4/9. The protein operates within amino-acid biosynthesis; L-tryptophan biosynthesis; L-tryptophan from chorismate: step 3/5. Involved in both the histidine and tryptophan biosynthetic pathways. The sequence is that of Phosphoribosyl isomerase A from Streptomyces avermitilis (strain ATCC 31267 / DSM 46492 / JCM 5070 / NBRC 14893 / NCIMB 12804 / NRRL 8165 / MA-4680).